The following is an 855-amino-acid chain: Alanine--tRNA ligase (855 aa).

Positions 555, 559, 657, and 661 each coordinate Zn(2+).

It belongs to the class-II aminoacyl-tRNA synthetase family. Zn(2+) serves as cofactor.

The protein resides in the cytoplasm. The catalysed reaction is tRNA(Ala) + L-alanine + ATP = L-alanyl-tRNA(Ala) + AMP + diphosphate. Functionally, catalyzes the attachment of alanine to tRNA(Ala) in a two-step reaction: alanine is first activated by ATP to form Ala-AMP and then transferred to the acceptor end of tRNA(Ala). Also edits incorrectly charged Ser-tRNA(Ala) and Gly-tRNA(Ala) via its editing domain. This is Alanine--tRNA ligase from Wolinella succinogenes (strain ATCC 29543 / DSM 1740 / CCUG 13145 / JCM 31913 / LMG 7466 / NCTC 11488 / FDC 602W) (Vibrio succinogenes).